Reading from the N-terminus, the 476-residue chain is Aspartyl/glutamyl-tRNA(Asn/Gln) amidotransferase subunit B (476 aa).

Belongs to the GatB/GatE family. GatB subfamily. In terms of assembly, heterotrimer of A, B and C subunits.

It catalyses the reaction L-glutamyl-tRNA(Gln) + L-glutamine + ATP + H2O = L-glutaminyl-tRNA(Gln) + L-glutamate + ADP + phosphate + H(+). The enzyme catalyses L-aspartyl-tRNA(Asn) + L-glutamine + ATP + H2O = L-asparaginyl-tRNA(Asn) + L-glutamate + ADP + phosphate + 2 H(+). Its function is as follows. Allows the formation of correctly charged Asn-tRNA(Asn) or Gln-tRNA(Gln) through the transamidation of misacylated Asp-tRNA(Asn) or Glu-tRNA(Gln) in organisms which lack either or both of asparaginyl-tRNA or glutaminyl-tRNA synthetases. The reaction takes place in the presence of glutamine and ATP through an activated phospho-Asp-tRNA(Asn) or phospho-Glu-tRNA(Gln). This is Aspartyl/glutamyl-tRNA(Asn/Gln) amidotransferase subunit B from Clostridium botulinum (strain Okra / Type B1).